Consider the following 428-residue polypeptide: MIIGIDDTDSNEGMCTTYLGALLLEELQEYGTVETLPLLVRLNPTIPYKTRGNAAIALKLKTDCPEKIIAHVTSRIEEFARMECEKTNPGAVFIQEKDYRSLKPILLSFLEKAVKDVIEIETAKHLISELGISSKSFKNGRGLIGALAACGAMLNPEKWDCTFEHLAYRQKKKWGSPRDVNKDSFFEADRQTYPGTWDTVDLANRLVVCVPHSADPVLFGIRGESPELVSKAASLIRSEPVERFAVYRTNQGTDMHLLPAASISEIRDMHSYRFEGTVSAVPKTIEGGHVIFAVRDGKGDEIDCAAFEPTKNFRVLARRLLLGDQIFLSGSVTSGTLNIEKMQVKELVLLYREENPKCPECGKHMKSAGQGQGFRCKKCGTRASSKIRCEAERDLEPGLYEVPPCARRHLAKPLARERDQNIRIHPSR.

The protein belongs to the TiaS family.

Its subcellular location is the cytoplasm. It carries out the reaction cytidine(34) in tRNA(Ile2) + agmatine + ATP + H2O = 2-agmatinylcytidine(34) in tRNA(Ile2) + AMP + 2 phosphate + 2 H(+). In terms of biological role, ATP-dependent agmatine transferase that catalyzes the formation of 2-agmatinylcytidine (agm2C) at the wobble position (C34) of tRNA(Ile2), converting the codon specificity from AUG to AUA. The protein is tRNA(Ile2) 2-agmatinylcytidine synthetase TiaS of Methanosarcina acetivorans (strain ATCC 35395 / DSM 2834 / JCM 12185 / C2A).